A 201-amino-acid chain; its full sequence is Translation machinery-associated protein 22 (201 aa).

The SUI1 domain occupies 94 to 165 (VTIKRIERNK…EARAYIEKLL (72 aa)).

It belongs to the DENR family. As to quaternary structure, interacts with the 40S ribosomal subunit.

The protein resides in the cytoplasm. This chain is Translation machinery-associated protein 22 (TMA22), found in Meyerozyma guilliermondii (strain ATCC 6260 / CBS 566 / DSM 6381 / JCM 1539 / NBRC 10279 / NRRL Y-324) (Yeast).